We begin with the raw amino-acid sequence, 422 residues long: Ornithine decarboxylase (422 aa).

Lys-71 is modified (N6-(pyridoxal phosphate)lysine). Residues Ser-203, Gly-240, and 275–278 (EPGR) contribute to the pyridoxal 5'-phosphate site. 331–332 (FD) is a substrate binding site. The active-site Proton donor; shared with dimeric partner is the Cys-359. Substrate is bound at residue Asp-360. Tyr-388 is a binding site for pyridoxal 5'-phosphate.

It belongs to the Orn/Lys/Arg decarboxylase class-II family. Homodimer. Only the dimer is catalytically active, as the active sites are constructed of residues from both monomers. Requires pyridoxal 5'-phosphate as cofactor.

The enzyme catalyses L-ornithine + H(+) = putrescine + CO2. Its pathway is amine and polyamine biosynthesis; putrescine biosynthesis via L-ornithine pathway; putrescine from L-ornithine: step 1/1. With respect to regulation, inhibited by antizyme (AZ) in response to polyamine levels. AZ inhibits the assembly of the functional homodimer by binding to ODC monomers and targeting them for ubiquitin-independent proteolytic destruction by the 26S proteasome. In terms of biological role, catalyzes the first and rate-limiting step of polyamine biosynthesis that converts ornithine into putrescine, which is the precursor for the polyamines, spermidine and spermine. Polyamines are essential for cell proliferation and are implicated in cellular processes, ranging from DNA replication to apoptosis. This Caenorhabditis elegans protein is Ornithine decarboxylase.